We begin with the raw amino-acid sequence, 152 residues long: Lipoprotein signal peptidase (152 aa).

Transmembrane regions (helical) follow at residues 55–75 (NKMWFFYIITVVFVVFIVFYM) and 85–105 (LGISLGLILGGAIGNFIDRVF). Residues Asp111 and Asp129 contribute to the active site. A helical membrane pass occupies residues 124-144 (VFNIADSALCIGVVLIIIQTL).

This sequence belongs to the peptidase A8 family.

The protein localises to the cell membrane. It catalyses the reaction Release of signal peptides from bacterial membrane prolipoproteins. Hydrolyzes -Xaa-Yaa-Zaa-|-(S,diacylglyceryl)Cys-, in which Xaa is hydrophobic (preferably Leu), and Yaa (Ala or Ser) and Zaa (Gly or Ala) have small, neutral side chains.. Its pathway is protein modification; lipoprotein biosynthesis (signal peptide cleavage). Its function is as follows. This protein specifically catalyzes the removal of signal peptides from prolipoproteins. The protein is Lipoprotein signal peptidase of Bacillus cereus (strain G9842).